Reading from the N-terminus, the 275-residue chain is Nitrogenase iron protein 1 (275 aa).

Residue 9-16 (GKGGIGKS) participates in ATP binding. C98 contributes to the [4Fe-4S] cluster binding site. The residue at position 101 (R101) is an ADP-ribosylarginine; by dinitrogenase reductase ADP-ribosyltransferase. Residue C132 coordinates [4Fe-4S] cluster.

It belongs to the NifH/BchL/ChlL family. Homodimer. The cofactor is [4Fe-4S] cluster. The reversible ADP-ribosylation of Arg-101 inactivates the nitrogenase reductase and regulates nitrogenase activity.

The enzyme catalyses N2 + 8 reduced [2Fe-2S]-[ferredoxin] + 16 ATP + 16 H2O = H2 + 8 oxidized [2Fe-2S]-[ferredoxin] + 2 NH4(+) + 16 ADP + 16 phosphate + 6 H(+). The key enzymatic reactions in nitrogen fixation are catalyzed by the nitrogenase complex, which has 2 components: the iron protein and the molybdenum-iron protein. In Methanobacterium ivanovii, this protein is Nitrogenase iron protein 1 (nifH1).